The sequence spans 346 residues: Olfactory receptor 8G5 (346 aa).

At 1–60 (MIIYKQGITFLQKENNNTIHLNTMFFLSPAETHQRMAAENHSFVTKFILVGLTEKSELQL) the chain is on the extracellular side. N-linked (GlcNAc...) asparagine glycosylation is found at asparagine 16 and asparagine 40. A helical transmembrane segment spans residues 61–81 (PLFLVFLGIYVVTVLGNLGMI). At 82–89 (TLIGLSSH) the chain is on the cytoplasmic side. The chain crosses the membrane as a helical span at residues 90 to 110 (LHTPMYCFLSSLSFIDFCHST). Over 111-134 (VITPKMLVNFVTEKNIISYPECMT) the chain is Extracellular. Cysteine 132 and cysteine 214 are joined by a disulfide. The chain crosses the membrane as a helical span at residues 135 to 155 (QLYFFLVFAIAECHMLAAMAY). Residues 156–174 (DGYVAICSPLLYSIIISNK) are Cytoplasmic-facing. A helical transmembrane segment spans residues 175–195 (ACFSLILVVYVIGLICASAHI). The Extracellular segment spans residues 196-232 (GCMFRVQFCKFDVINHYFCDLISILKLSCSSTYINEL). A helical transmembrane segment spans residues 233 to 252 (LILIFSGINILVPSLTILSS). The Cytoplasmic segment spans residues 253–272 (YIFIIASILRIRYTEGRSKA). The helical transmembrane segment at 273–293 (FSTCSSHISAVSVFFGSAAFM) threads the bilayer. Over 294 to 306 (YLQPSSVSSMDQG) the chain is Extracellular. A helical membrane pass occupies residues 307–327 (KVSSVFYTIVVPMLNPLIYSL). The Cytoplasmic segment spans residues 328–346 (RNKDVHVALKKTLGKRTFL).

Belongs to the G-protein coupled receptor 1 family.

It is found in the cell membrane. Odorant receptor. The protein is Olfactory receptor 8G5 (OR8G5) of Homo sapiens (Human).